Consider the following 293-residue polypeptide: 4-hydroxy-tetrahydrodipicolinate synthase (293 aa).

Residue threonine 44 coordinates pyruvate. The active-site Proton donor/acceptor is tyrosine 132. Catalysis depends on lysine 161, which acts as the Schiff-base intermediate with substrate. Isoleucine 203 contributes to the pyruvate binding site.

It belongs to the DapA family. Homotetramer; dimer of dimers.

The protein localises to the cytoplasm. The catalysed reaction is L-aspartate 4-semialdehyde + pyruvate = (2S,4S)-4-hydroxy-2,3,4,5-tetrahydrodipicolinate + H2O + H(+). It functions in the pathway amino-acid biosynthesis; L-lysine biosynthesis via DAP pathway; (S)-tetrahydrodipicolinate from L-aspartate: step 3/4. Its function is as follows. Catalyzes the condensation of (S)-aspartate-beta-semialdehyde [(S)-ASA] and pyruvate to 4-hydroxy-tetrahydrodipicolinate (HTPA). This chain is 4-hydroxy-tetrahydrodipicolinate synthase, found in Sulfurihydrogenibium sp. (strain YO3AOP1).